Here is a 78-residue protein sequence, read N- to C-terminus: MSTIEERVKKIVAEQLGVKEEEVVNTASFVEDLGADSLDTVELVMALEEEFETEIPDEEAEKITTVQAAIDYVTSHQA.

The 76-residue stretch at 2–77 folds into the Carrier domain; that stretch reads STIEERVKKI…AAIDYVTSHQ (76 aa). S37 is modified (O-(pantetheine 4'-phosphoryl)serine).

The protein belongs to the acyl carrier protein (ACP) family. Post-translationally, 4'-phosphopantetheine is transferred from CoA to a specific serine of apo-ACP by AcpS. This modification is essential for activity because fatty acids are bound in thioester linkage to the sulfhydryl of the prosthetic group.

It localises to the cytoplasm. It participates in lipid metabolism; fatty acid biosynthesis. Functionally, carrier of the growing fatty acid chain in fatty acid biosynthesis. The protein is Acyl carrier protein of Pseudomonas fluorescens (strain SBW25).